The primary structure comprises 179 residues: Nucleoside-triphosphatase THEP1 (179 aa).

ATP-binding positions include 7 to 14 (GRPGVGKT) and 94 to 101 (LIIVDEIG).

This sequence belongs to the THEP1 NTPase family.

The enzyme catalyses a ribonucleoside 5'-triphosphate + H2O = a ribonucleoside 5'-diphosphate + phosphate + H(+). In terms of biological role, has nucleotide phosphatase activity towards ATP, GTP, CTP, TTP and UTP. May hydrolyze nucleoside diphosphates with lower efficiency. The chain is Nucleoside-triphosphatase THEP1 from Thermotoga petrophila (strain ATCC BAA-488 / DSM 13995 / JCM 10881 / RKU-1).